A 340-amino-acid polypeptide reads, in one-letter code: Methionine import ATP-binding protein MetN 1 (340 aa).

The ABC transporter domain maps to I2–V242. G39–S46 is an ATP binding site.

This sequence belongs to the ABC transporter superfamily. Methionine importer (TC 3.A.1.24) family. In terms of assembly, the complex is composed of two ATP-binding proteins (MetN), two transmembrane proteins (MetI) and a solute-binding protein (MetQ).

The protein resides in the cell inner membrane. It carries out the reaction L-methionine(out) + ATP + H2O = L-methionine(in) + ADP + phosphate + H(+). The catalysed reaction is D-methionine(out) + ATP + H2O = D-methionine(in) + ADP + phosphate + H(+). Functionally, part of the ABC transporter complex MetNIQ involved in methionine import. Responsible for energy coupling to the transport system. The sequence is that of Methionine import ATP-binding protein MetN 1 from Pectobacterium atrosepticum (strain SCRI 1043 / ATCC BAA-672) (Erwinia carotovora subsp. atroseptica).